Consider the following 552-residue polypeptide: HTH-type transcriptional regulator SgrR (552 aa).

In terms of domain architecture, HTH marR-type spans 1-116 (MPSARLQQQF…LVSHLGRSFR (116 aa)). Residues 26-49 (LNELAALLSCSRRHMRTLLNTMQD) constitute a DNA-binding region (H-T-H motif). Positions 163-492 (ELEADIAHHW…IDWQADAARW (330 aa)) are solute-binding.

Its function is as follows. Activates the small RNA gene sgrS under glucose-phosphate stress conditions as well as yfdZ. Represses its own transcription under both stress and non-stress conditions. Might act as a sensor of the intracellular accumulation of phosphoglucose by binding these molecules in its C-terminal solute-binding domain. The chain is HTH-type transcriptional regulator SgrR from Shigella dysenteriae serotype 1 (strain Sd197).